A 327-amino-acid chain; its full sequence is Phenylalanine--tRNA ligase alpha subunit (327 aa).

A Mg(2+)-binding site is contributed by Glu252.

This sequence belongs to the class-II aminoacyl-tRNA synthetase family. Phe-tRNA synthetase alpha subunit type 1 subfamily. As to quaternary structure, tetramer of two alpha and two beta subunits. Mg(2+) serves as cofactor.

It localises to the cytoplasm. It carries out the reaction tRNA(Phe) + L-phenylalanine + ATP = L-phenylalanyl-tRNA(Phe) + AMP + diphosphate + H(+). In Shigella dysenteriae serotype 1 (strain Sd197), this protein is Phenylalanine--tRNA ligase alpha subunit.